The chain runs to 145 residues: Venom protein 30.1 (145 aa).

Residues 1–18 form the signal peptide; sequence MIIVKLFTCLLMVSSVLT.

Contains 5 disulfide bonds. Expressed by the venom gland.

The protein localises to the secreted. The polypeptide is Venom protein 30.1 (Lychas mucronatus (Chinese swimming scorpion)).